The sequence spans 275 residues: NAD kinase (275 aa).

Asp-68 (proton acceptor) is an active-site residue. Residues 68–69 (DG), Arg-73, 136–137 (NE), Lys-147, Arg-164, Asp-166, 177–182 (TAYAMS), Ala-201, and Gln-236 contribute to the NAD(+) site.

This sequence belongs to the NAD kinase family. Requires a divalent metal cation as cofactor.

The protein resides in the cytoplasm. The catalysed reaction is NAD(+) + ATP = ADP + NADP(+) + H(+). In terms of biological role, involved in the regulation of the intracellular balance of NAD and NADP, and is a key enzyme in the biosynthesis of NADP. Catalyzes specifically the phosphorylation on 2'-hydroxyl of the adenosine moiety of NAD to yield NADP. The protein is NAD kinase of Methanosarcina acetivorans (strain ATCC 35395 / DSM 2834 / JCM 12185 / C2A).